Consider the following 423-residue polypeptide: D-tagatose-1,6-bisphosphate aldolase subunit GatZ (423 aa).

This sequence belongs to the GatZ/KbaZ family. GatZ subfamily. As to quaternary structure, forms a complex with GatY.

Its pathway is carbohydrate metabolism; D-tagatose 6-phosphate degradation; D-glyceraldehyde 3-phosphate and glycerone phosphate from D-tagatose 6-phosphate: step 2/2. Its function is as follows. Component of the tagatose-1,6-bisphosphate aldolase GatYZ that is required for full activity and stability of the Y subunit. Could have a chaperone-like function for the proper and stable folding of GatY. When expressed alone, GatZ does not show any aldolase activity. Is involved in the catabolism of galactitol. In Salmonella enteritidis PT4 (strain P125109), this protein is D-tagatose-1,6-bisphosphate aldolase subunit GatZ.